The sequence spans 163 residues: Nucleotide-binding protein Ava_2001 (163 aa).

Belongs to the YajQ family.

Functionally, nucleotide-binding protein. The polypeptide is Nucleotide-binding protein Ava_2001 (Trichormus variabilis (strain ATCC 29413 / PCC 7937) (Anabaena variabilis)).